We begin with the raw amino-acid sequence, 436 residues long: MYCSSSMHPNANKENISTSDVQESFVRITRSRAKKAMGRGVSIPPTKPSFKQQKRRAVLKDVSNTSADIIYSELRKGGNIKANRKCLKEPKKAAKEGANSAMDILVDMHTEKSKLAEDLSKIRMAEAQDVSLSNFKDEEITEQQEDGSGVMELLQVVDIDSNVEDPQCCSLYAADIYDNIHVAELQQRPLANYMELVQRDIDPDMRKILIDWLVEVSDDYKLVPDTLYLTVNLIDRFLSNSYIERQRLQLLGVSCMLIASKYEELSAPGVEEFCFITANTYTRPEVLSMEIQILNFVHFRLSVPTTKTFLRRFIKAAQASYKVPFIELEYLANYLAELTLVEYSFLRFLPSLIAASAVFLARWTLDQTDHPWNPTLQHYTRYEVAELKNTVLAMEDLQLNTSGCTLAATREKYNQPKFKSVAKLTSPKRVTSLFSR.

The protein belongs to the cyclin family. Cyclin AB subfamily. In terms of tissue distribution, expressed in roots, stems, leaves, flowers and siliques.

The chain is Cyclin-A2-2 (CYCA2-2) from Arabidopsis thaliana (Mouse-ear cress).